We begin with the raw amino-acid sequence, 208 residues long: 3-demethoxyubiquinol 3-hydroxylase (208 aa).

The Fe cation site is built by E57, E87, H90, E139, E171, and H174.

The protein belongs to the COQ7 family. Requires Fe cation as cofactor.

It localises to the cell membrane. The catalysed reaction is a 5-methoxy-2-methyl-3-(all-trans-polyprenyl)benzene-1,4-diol + AH2 + O2 = a 3-demethylubiquinol + A + H2O. Its pathway is cofactor biosynthesis; ubiquinone biosynthesis. Catalyzes the hydroxylation of 2-nonaprenyl-3-methyl-6-methoxy-1,4-benzoquinol during ubiquinone biosynthesis. The sequence is that of 3-demethoxyubiquinol 3-hydroxylase from Burkholderia mallei (strain NCTC 10229).